The following is a 518-amino-acid chain: MTQHDRLLIIDFGSQVTQLIARRLRELNVYCEIHPYQNVTEAFLKGFAPKAVIFSGGPSSVFAEGAPMPPAGVFDLGVPILGICYGQQVMMHCLGGKVERGHGTAEFGRAFVTPTAERLAILDGWFEEGREQVWMSHGDHVSQIAPGFQVFGTSPNAPFAITGDPARHFYAVQFHPEVHHTPKGAKLYENFVRLAGFKGDWTMGAYREEAIARIRAQVGDQKVICGLSGGVDSSVAAVLIHEAIGDQLTCVFVDHGLLRLGEAEQVVTMFRDHYNMPLIHADESDLFLGALEGVSDPEVKRKTIGRLFIDVFQKHAADVGGATFLAQGTLYPDVIESVSFSGGPSVTIKSHHNVGGLPEKMGLKLVEPLRELFKDEVRALGRELGLPESFIGRHPFPGPGLAIRCPGEITREKLEILRRADAVYIDQIRRHGLYDEIWQAFVALLPVRTVGVMGDGRTYDYACALRAVTSVDGMTADYYPFTHDFLGETATRIINEVQGINRVTYDITSKPPGTIEWE.

The Glutamine amidotransferase type-1 domain occupies 6-200 (RLLIIDFGSQ…FVRLAGFKGD (195 aa)). The Nucleophile role is filled by Cys-84. Catalysis depends on residues His-175 and Glu-177. In terms of domain architecture, GMPS ATP-PPase spans 201-393 (WTMGAYREEA…LGLPESFIGR (193 aa)). Residue 228 to 234 (SGGVDSS) participates in ATP binding.

Homodimer.

It catalyses the reaction XMP + L-glutamine + ATP + H2O = GMP + L-glutamate + AMP + diphosphate + 2 H(+). It functions in the pathway purine metabolism; GMP biosynthesis; GMP from XMP (L-Gln route): step 1/1. Its function is as follows. Catalyzes the synthesis of GMP from XMP. The polypeptide is GMP synthase [glutamine-hydrolyzing] (Cereibacter sphaeroides (strain ATCC 17029 / ATH 2.4.9) (Rhodobacter sphaeroides)).